A 158-amino-acid chain; its full sequence is Encapsulin nanocompartment cargo protein EncB (158 aa).

Fe cation contacts are provided by Glu22, Glu52, and His55. 2 consecutive short sequence motifs (di-iron-binding motif) follow at residues 52 to 55 (EKEH) and 58 to 61 (EAVH). Positions 92 to 158 (ATVHVPTPDG…RGGGGSGSGR (67 aa)) are disordered. The interval 142–149 (LTVGSLRR) is probable targeting peptide. Residues 148–158 (RRGGGGSGSGR) are compositionally biased toward gly residues.

Belongs to the ferritin-like superfamily.

Its subcellular location is the encapsulin nanocompartment. Its function is as follows. Cargo protein of a type 1 encapsulin nanocompartment. May help nucleate Fe atoms in the interior of the encapsulin nanocompartment. Present in about 36 copies/encapsulin nanocompartment. This chain is Encapsulin nanocompartment cargo protein EncB, found in Myxococcus xanthus (strain DK1622).